The primary structure comprises 591 residues: Aspartate--tRNA ligase (591 aa).

Glutamate 173 provides a ligand contact to L-aspartate. An aspartate region spans residues 197–200 (QLFK). Arginine 219 contributes to the L-aspartate binding site. ATP contacts are provided by residues 219–221 (RDE) and glutamine 228. Residue histidine 448 coordinates L-aspartate. Glutamate 482 is an ATP binding site. An L-aspartate-binding site is contributed by arginine 489. 534 to 537 (GLDR) is an ATP binding site.

The protein belongs to the class-II aminoacyl-tRNA synthetase family. Type 1 subfamily. Homodimer.

The protein resides in the cytoplasm. It catalyses the reaction tRNA(Asp) + L-aspartate + ATP = L-aspartyl-tRNA(Asp) + AMP + diphosphate. Functionally, catalyzes the attachment of L-aspartate to tRNA(Asp) in a two-step reaction: L-aspartate is first activated by ATP to form Asp-AMP and then transferred to the acceptor end of tRNA(Asp). This Shewanella sp. (strain MR-7) protein is Aspartate--tRNA ligase.